We begin with the raw amino-acid sequence, 385 residues long: Sesquiterpene alcohol synthase (385 aa).

The Mg(2+) site is built by aspartate 123 and aspartate 127. Positions 123–127 match the DDXXD motif motif; sequence DDISD.

It belongs to the terpene synthase family. Mg(2+) serves as cofactor. As to expression, specifically expressed in tissues lining the cuticle of the abdominal sternites of mature males.

It carries out the reaction (2E,6E)-farnesyl diphosphate + H2O = (1S,6S,7R)-sesquipiperitol + diphosphate. It participates in pheromone biosynthesis. In terms of biological role, sesquiterpene alcohol synthase that catalyzes the formation of (1S,6S,7R)-sesquipiperitol, a terpene intermediate in murgantiol biosynthesis, a male-released aggregation pheromone. This Murgantia histrionica (Harlequin bug) protein is Sesquiterpene alcohol synthase.